Reading from the N-terminus, the 431-residue chain is Glycerol-3-phosphate dehydrogenase [NAD(P)+] (431 aa).

Residues serine 79, phenylalanine 80, arginine 100, and lysine 173 each coordinate NADPH. 2 residues coordinate sn-glycerol 3-phosphate: lysine 173 and glycine 201. Alanine 205 serves as a coordination point for NADPH. The sn-glycerol 3-phosphate site is built by lysine 256, aspartate 309, serine 319, arginine 320, and asparagine 321. Lysine 256 (proton acceptor) is an active-site residue. Arginine 320 contacts NADPH. Glutamate 346 is a binding site for NADPH.

Belongs to the NAD-dependent glycerol-3-phosphate dehydrogenase family.

The protein localises to the cytoplasm. The enzyme catalyses sn-glycerol 3-phosphate + NAD(+) = dihydroxyacetone phosphate + NADH + H(+). It catalyses the reaction sn-glycerol 3-phosphate + NADP(+) = dihydroxyacetone phosphate + NADPH + H(+). It functions in the pathway membrane lipid metabolism; glycerophospholipid metabolism. Functionally, catalyzes the reduction of the glycolytic intermediate dihydroxyacetone phosphate (DHAP) to sn-glycerol 3-phosphate (G3P), the key precursor for phospholipid synthesis. This chain is Glycerol-3-phosphate dehydrogenase [NAD(P)+], found in Psychrobacter cryohalolentis (strain ATCC BAA-1226 / DSM 17306 / VKM B-2378 / K5).